Here is a 131-residue protein sequence, read N- to C-terminus: Small ribosomal subunit protein uS8 (131 aa).

This sequence belongs to the universal ribosomal protein uS8 family. Part of the 30S ribosomal subunit. Contacts proteins S5 and S12.

Functionally, one of the primary rRNA binding proteins, it binds directly to 16S rRNA central domain where it helps coordinate assembly of the platform of the 30S subunit. This Burkholderia ambifaria (strain MC40-6) protein is Small ribosomal subunit protein uS8.